Consider the following 231-residue polypeptide: NADH-ubiquinone oxidoreductase chain 4 (231 aa).

The next 7 membrane-spanning stretches (helical) occupy residues 1 to 21 (PIAGSMVLAAVLLKLGGYGII), 34 to 54 (MFLPFIVLALWGAILANLTCL), 63 to 85 (IAYSSISHMGLVVAAIIIQTPWG), 89 to 111 (AMALMIAHGFTSSALFCLANTTY), 128 to 148 (ILPMTTTWWLLANLMNIATPP), 169 to 189 (TIILLGLSMLITASYSLHMFL), and 211 to 231 (LLMALHLVPLMMISMKPELII).

The protein belongs to the complex I subunit 4 family.

The protein resides in the mitochondrion membrane. The catalysed reaction is a ubiquinone + NADH + 5 H(+)(in) = a ubiquinol + NAD(+) + 4 H(+)(out). Core subunit of the mitochondrial membrane respiratory chain NADH dehydrogenase (Complex I) that is believed to belong to the minimal assembly required for catalysis. Complex I functions in the transfer of electrons from NADH to the respiratory chain. The immediate electron acceptor for the enzyme is believed to be ubiquinone. This Cerrophidion godmani (Porthidium godmani) protein is NADH-ubiquinone oxidoreductase chain 4 (MT-ND4).